Reading from the N-terminus, the 512-residue chain is ADP,ATP carrier protein 4 (512 aa).

11 helical membrane passes run 34–54 (ISKF…QNLI), 71–91 (ISFL…VIYV), 102–122 (IFYL…YVIF), 157–177 (FSLF…LLFW), 192–212 (FYPL…HFLE), 231–251 (FHTL…IVSI), 296–316 (LIAT…GPWK), 330–350 (AAFI…FVLL), 361–381 (FTSA…FFAV), 390–410 (LIIA…IGAI), and 476–496 (SISI…IWAT).

It belongs to the ADP/ATP translocase tlc family.

The protein resides in the cell membrane. Functionally, provides the rickettsial cell with host ATP in exchange for rickettsial ADP. This is an obligate exchange system. This energy acquiring activity is an important component of rickettsial parasitism. The protein is ADP,ATP carrier protein 4 (tlcD) of Rickettsia prowazekii (strain Madrid E).